Reading from the N-terminus, the 94-residue chain is Histone-like DNA-binding protein (94 aa).

It belongs to the bacterial histone-like protein family.

This chain is Histone-like DNA-binding protein, found in Rickettsia bellii (strain RML369-C).